The primary structure comprises 454 residues: Gastrin/cholecystokinin type B receptor (454 aa).

Residues 1–57 (MELLKPNRSVLGSGPGPGASLCRSGGPLLNGSGTGNLSCEPPRIRGAGTRELELAIR) are Extracellular-facing. 3 N-linked (GlcNAc...) asparagine glycosylation sites follow: N7, N30, and N36. A helical membrane pass occupies residues 58 to 79 (VTLYAVIFLMSVGGNVLIIVVL). Topologically, residues 80-87 (GLSRRLRT) are cytoplasmic. The chain crosses the membrane as a helical span at residues 88–109 (VTNAFLLSLAVSDLLLAVACMP). At 110-131 (FTLLPNLMGTFIFGTVVCKAVS) the chain is on the extracellular side. C127 and C205 are disulfide-bonded. Residues 132-150 (YFMGVSVSVSTLSLVAIAL) form a helical membrane-spanning segment. Topologically, residues 151-170 (ERYSAICRPLQARVWQTRSH) are cytoplasmic. A helical transmembrane segment spans residues 171–189 (AARVIVATWMLSGLLMVPY). The Extracellular segment spans residues 190 to 219 (PVYTAVQPAGPRVLQCMHRWPSARVRQTWS). The chain crosses the membrane as a helical span at residues 220-242 (VLLLLLLFFVPGVVMAVAYGLIS). At 243–340 (RELYLGLRFD…KLLAKKRVVR (98 aa)) the chain is on the cytoplasmic side. Positions 257–284 (SESQSRVGSQGGLPGGTGQGPAQANGRC) are disordered. Positions 265 to 275 (SQGGLPGGTGQ) are enriched in gly residues. The chain crosses the membrane as a helical span at residues 341–362 (MLLVIVVLFFLCWLPVYSANTW). Over 363 to 380 (RAFDGPGAHRALSGAPIS) the chain is Extracellular. A helical membrane pass occupies residues 381 to 401 (FIHLLTYASACVNPLVYCFMH). The Cytoplasmic portion of the chain corresponds to 402–454 (RRFRQACLDTCTRCCPRPPRARPRPLPDEDPPTPSIASLSRLSYTTISTLGPG). C415 is lipidated: S-palmitoyl cysteine. The interval 422–441 (ARPRPLPDEDPPTPSIASLS) is disordered.

The protein belongs to the G-protein coupled receptor 1 family.

The protein localises to the cell membrane. Receptor for gastrin and cholecystokinin. The CCK-B receptors occur throughout the central nervous system where they modulate anxiety, analgesia, arousal, and neuroleptic activity. This receptor mediates its action by association with G proteins that activate a phosphatidylinositol-calcium second messenger system. In Bos taurus (Bovine), this protein is Gastrin/cholecystokinin type B receptor (CCKBR).